The following is a 297-amino-acid chain: Acetyl-coenzyme A carboxylase carboxyl transferase subunit beta (297 aa).

The disordered stretch occupies residues 1–23; that stretch reads MSWIERILGRTSSSSSSSKSKVP. The CoA carboxyltransferase N-terminal domain maps to 26–295; that stretch reads VWTKCTSCEQ…PFKTAELIVE (270 aa). 4 residues coordinate Zn(2+): C30, C33, C49, and C52. Residues 30–52 form a C4-type zinc finger; that stretch reads CTSCEQVLYSEELKRNMHVCPKC.

This sequence belongs to the AccD/PCCB family. As to quaternary structure, acetyl-CoA carboxylase is a heterohexamer composed of biotin carboxyl carrier protein (AccB), biotin carboxylase (AccC) and two subunits each of ACCase subunit alpha (AccA) and ACCase subunit beta (AccD). The cofactor is Zn(2+).

It is found in the cytoplasm. The catalysed reaction is N(6)-carboxybiotinyl-L-lysyl-[protein] + acetyl-CoA = N(6)-biotinyl-L-lysyl-[protein] + malonyl-CoA. The protein operates within lipid metabolism; malonyl-CoA biosynthesis; malonyl-CoA from acetyl-CoA: step 1/1. Functionally, component of the acetyl coenzyme A carboxylase (ACC) complex. Biotin carboxylase (BC) catalyzes the carboxylation of biotin on its carrier protein (BCCP) and then the CO(2) group is transferred by the transcarboxylase to acetyl-CoA to form malonyl-CoA. This Actinobacillus pleuropneumoniae serotype 5b (strain L20) protein is Acetyl-coenzyme A carboxylase carboxyl transferase subunit beta.